A 976-amino-acid polypeptide reads, in one-letter code: Vacuolar membrane protease (976 aa).

Topologically, residues 1 to 15 (MKLKSVFRSVLKYRK) are cytoplasmic. A helical transmembrane segment spans residues 16–36 (TNLSLLLLITYSIITLLYIFD). At 37 to 359 (HERYKLNLPK…KFFVISAKTL (323 aa)) the chain is on the vacuolar side. 2 N-linked (GlcNAc...) asparagine glycosylation sites follow: Asn96 and Asn121. Zn(2+)-binding residues include His156 and Asp168. Residue Asn189 is glycosylated (N-linked (GlcNAc...) asparagine). Glu200 acts as the Proton acceptor in catalysis. A Zn(2+)-binding site is contributed by Glu201. Residues Asn212 and Asn217 are each glycosylated (N-linked (GlcNAc...) asparagine). Zn(2+) contacts are provided by Glu226 and His300. The helical transmembrane segment at 360–380 (FYWNCIFLLVSPVVAIGLYLI) threads the bilayer. Over 381 to 392 (SRDRMTWKSHSW) the chain is Cytoplasmic. The helical transmembrane segment at 393-412 (LSWTRFPLSLAAGIIVQKLF) threads the bilayer. Residues 413–428 (SNDIIRSNPLTFSRNY) are Vacuolar-facing. A helical membrane pass occupies residues 429–449 (FWPISAFFTQVIFTSYVLINC). The Cytoplasmic portion of the chain corresponds to 450 to 461 (SNFFFPCADMKS). A helical membrane pass occupies residues 462–482 (LSIIELFIILWTILLFTSKLL). Residues 483–496 (YSSDYRYTGLYPLS) are Vacuolar-facing. The chain crosses the membrane as a helical span at residues 497–517 (IFFLLSTIAAILRLLALALGM). Topologically, residues 518-627 (RTRKRLGREC…NSLKLEYTDY (110 aa)) are cytoplasmic. Positions 528-610 (RDHHSNYSSH…PLLKGSNSME (83 aa)) are disordered. Positions 549–558 (NLEQPQDQFT) are enriched in polar residues. Positions 559 to 570 (SSQDDQASIQDD) are enriched in low complexity. Basic and acidic residues predominate over residues 582 to 601 (NVDEDHGMDSSSQQHDERVP). A helical transmembrane segment spans residues 628 to 648 (AWIIQFLLIVPIPSFILFNSV). Residues 649–668 (DVIMDALNHTVQEGSKATFD) are Vacuolar-facing. Residue Asn656 is glycosylated (N-linked (GlcNAc...) asparagine). The chain crosses the membrane as a helical span at residues 669–689 (VLRFGMVGSILMALPILPFFY). The Cytoplasmic segment spans residues 690 to 692 (KVN). The helical transmembrane segment at 693–713 (YITISLTALLFLISASKTLLV) threads the bilayer. Residues 714–976 (HPFTNSNPLK…LVIVKDAIIL (263 aa)) lie on the Vacuolar side of the membrane. N-linked (GlcNAc...) asparagine glycosylation is found at Asn768, Asn796, Asn811, Asn866, and Asn937.

It belongs to the peptidase M28 family. Zn(2+) serves as cofactor.

It is found in the vacuole membrane. Functionally, may be involved in vacuolar sorting and osmoregulation. This chain is Vacuolar membrane protease, found in Saccharomyces cerevisiae (strain Lalvin EC1118 / Prise de mousse) (Baker's yeast).